A 320-amino-acid chain; its full sequence is MSYSDLKLFALSSNKELAEKVASAMGIQLGKSTVRQFSDGEIQVNIEESIRGHHVFILQSTSSPVNDNLMEILIMVDALKRASAEKISVVMPYYGYARQDRKARSREPITSKLVANMLEVAGVDRLLTVDLHAAQIQGFFDIPVDHLMGAPLIADYFDRHGLVGEDVVVVSPDHGGVTRARKLAQFLQTPIAIIDKRRSVDKMNTSEVMNIIGNVSGKKCILIDDMIDTAGTICHAADALAEAGATAVYASCTHPVLSGPALDNIQRSAIEKLIVLDTIYLPKERLIDKIEQISIADLVAEAIIRIHEKRPLSPLFEMGN.

Residues 39–41 and 98–99 each bind ATP; these read DGE and RQ. Mg(2+) is bound by residues His-132 and Asp-173. Residue Lys-196 is part of the active site. Residues Arg-198, Asp-224, and 228–232 each bind D-ribose 5-phosphate; that span reads DTAGT.

The protein belongs to the ribose-phosphate pyrophosphokinase family. Class I subfamily. In terms of assembly, homohexamer. Mg(2+) is required as a cofactor.

The protein localises to the cytoplasm. The catalysed reaction is D-ribose 5-phosphate + ATP = 5-phospho-alpha-D-ribose 1-diphosphate + AMP + H(+). Its pathway is metabolic intermediate biosynthesis; 5-phospho-alpha-D-ribose 1-diphosphate biosynthesis; 5-phospho-alpha-D-ribose 1-diphosphate from D-ribose 5-phosphate (route I): step 1/1. In terms of biological role, involved in the biosynthesis of the central metabolite phospho-alpha-D-ribosyl-1-pyrophosphate (PRPP) via the transfer of pyrophosphoryl group from ATP to 1-hydroxyl of ribose-5-phosphate (Rib-5-P). The chain is Ribose-phosphate pyrophosphokinase 1 from Streptococcus pyogenes serotype M1.